Here is a 234-residue protein sequence, read N- to C-terminus: LexA repressor (234 aa).

Over residues 1–11 (MNEATSHEGPK) the composition is skewed to basic and acidic residues. Positions 1–34 (MNEATSHEGPKRSLPGRPPGIRADSSGLTDRQRR) are disordered. A DNA-binding region (H-T-H motif) is located at residues 52–72 (MREIGQAVGLSSTSSVAHQLM). Positions 83–94 (DPHRPRAYEVRG) are enriched in basic and acidic residues. Positions 83 to 109 (DPHRPRAYEVRGSDQSSSVQPTDTAGK) are disordered. Positions 95 to 105 (SDQSSSVQPTD) are enriched in polar residues. Active-site for autocatalytic cleavage activity residues include Ser-158 and Lys-195.

This sequence belongs to the peptidase S24 family. As to quaternary structure, homodimer.

The enzyme catalyses Hydrolysis of Ala-|-Gly bond in repressor LexA.. Represses a number of genes involved in the response to DNA damage (SOS response), including recA and lexA. In the presence of single-stranded DNA, RecA interacts with LexA causing an autocatalytic cleavage which disrupts the DNA-binding part of LexA, leading to derepression of the SOS regulon and eventually DNA repair. The sequence is that of LexA repressor from Streptomyces avermitilis (strain ATCC 31267 / DSM 46492 / JCM 5070 / NBRC 14893 / NCIMB 12804 / NRRL 8165 / MA-4680).